The primary structure comprises 788 residues: Endonuclease MutS2 (788 aa).

332 to 339 (GPNTGGKT) lines the ATP pocket. Residues 713–788 (VDLRGMDAEE…GTGVTVVELK (76 aa)) enclose the Smr domain.

This sequence belongs to the DNA mismatch repair MutS family. MutS2 subfamily. As to quaternary structure, homodimer. Binds to stalled ribosomes, contacting rRNA.

Functionally, endonuclease that is involved in the suppression of homologous recombination and thus may have a key role in the control of bacterial genetic diversity. Its function is as follows. Acts as a ribosome collision sensor, splitting the ribosome into its 2 subunits. Detects stalled/collided 70S ribosomes which it binds and splits by an ATP-hydrolysis driven conformational change. Acts upstream of the ribosome quality control system (RQC), a ribosome-associated complex that mediates the extraction of incompletely synthesized nascent chains from stalled ribosomes and their subsequent degradation. Probably generates substrates for RQC. The polypeptide is Endonuclease MutS2 (Clostridium botulinum (strain Langeland / NCTC 10281 / Type F)).